We begin with the raw amino-acid sequence, 635 residues long: Chaperone protein DnaK (635 aa).

Threonine 198 is subject to Phosphothreonine; by autocatalysis. The disordered stretch occupies residues 598–635; it reads YAKAQPGEEQAGGAPHEGEAKDEKVVDADFEEVKEDKK. Residues 613–624 are compositionally biased toward basic and acidic residues; sequence HEGEAKDEKVVD. Residues 625 to 635 show a composition bias toward acidic residues; sequence ADFEEVKEDKK.

Belongs to the heat shock protein 70 family.

In terms of biological role, acts as a chaperone. This is Chaperone protein DnaK from Geotalea uraniireducens (strain Rf4) (Geobacter uraniireducens).